Here is a 519-residue protein sequence, read N- to C-terminus: 2-isopropylmalate synthase (519 aa).

A Pyruvate carboxyltransferase domain is found at 12 to 274; sequence VVIFDTTLRD…WCNVESTTLT (263 aa). Mn(2+) is bound by residues aspartate 21, histidine 209, histidine 211, and asparagine 245. A regulatory domain region spans residues 398–519; that stretch reads RLVSLTVIAG…QREAPVAAAS (122 aa).

This sequence belongs to the alpha-IPM synthase/homocitrate synthase family. LeuA type 1 subfamily. In terms of assembly, homodimer. The cofactor is Mn(2+).

The protein localises to the cytoplasm. It carries out the reaction 3-methyl-2-oxobutanoate + acetyl-CoA + H2O = (2S)-2-isopropylmalate + CoA + H(+). The protein operates within amino-acid biosynthesis; L-leucine biosynthesis; L-leucine from 3-methyl-2-oxobutanoate: step 1/4. Its function is as follows. Catalyzes the condensation of the acetyl group of acetyl-CoA with 3-methyl-2-oxobutanoate (2-ketoisovalerate) to form 3-carboxy-3-hydroxy-4-methylpentanoate (2-isopropylmalate). This chain is 2-isopropylmalate synthase, found in Afipia carboxidovorans (strain ATCC 49405 / DSM 1227 / KCTC 32145 / OM5) (Oligotropha carboxidovorans).